The following is a 127-amino-acid chain: Large ribosomal subunit protein eL32B (127 aa).

This sequence belongs to the eukaryotic ribosomal protein eL32 family. Component of the large ribosomal subunit (LSU). Mature yeast ribosomes consist of a small (40S) and a large (60S) subunit. The 40S small subunit contains 1 molecule of ribosomal RNA (18S rRNA) and at least 33 different proteins. The large 60S subunit contains 3 rRNA molecules (25S, 5.8S and 5S rRNA) and at least 46 different proteins.

It localises to the cytoplasm. The protein resides in the nucleus. Its subcellular location is the nucleolus. Its function is as follows. Component of the ribosome, a large ribonucleoprotein complex responsible for the synthesis of proteins in the cell. The small ribosomal subunit (SSU) binds messenger RNAs (mRNAs) and translates the encoded message by selecting cognate aminoacyl-transfer RNA (tRNA) molecules. The large subunit (LSU) contains the ribosomal catalytic site termed the peptidyl transferase center (PTC), which catalyzes the formation of peptide bonds, thereby polymerizing the amino acids delivered by tRNAs into a polypeptide chain. The nascent polypeptides leave the ribosome through a tunnel in the LSU and interact with protein factors that function in enzymatic processing, targeting, and the membrane insertion of nascent chains at the exit of the ribosomal tunnel. The polypeptide is Large ribosomal subunit protein eL32B (rpl3201) (Schizosaccharomyces pombe (strain 972 / ATCC 24843) (Fission yeast)).